Consider the following 151-residue polypeptide: Deoxyuridine 5'-triphosphate nucleotidohydrolase (151 aa).

Substrate is bound by residues 70–72 (RSG), N83, 87–89 (LID), and M97.

The protein belongs to the dUTPase family. Mg(2+) serves as cofactor.

The catalysed reaction is dUTP + H2O = dUMP + diphosphate + H(+). It participates in pyrimidine metabolism; dUMP biosynthesis; dUMP from dCTP (dUTP route): step 2/2. This enzyme is involved in nucleotide metabolism: it produces dUMP, the immediate precursor of thymidine nucleotides and it decreases the intracellular concentration of dUTP so that uracil cannot be incorporated into DNA. The sequence is that of Deoxyuridine 5'-triphosphate nucleotidohydrolase from Psychromonas ingrahamii (strain DSM 17664 / CCUG 51855 / 37).